Consider the following 1215-residue polypeptide: DNA-directed RNA polymerase subunit beta' (1215 aa).

Zn(2+) is bound by residues cysteine 60, cysteine 62, cysteine 75, and cysteine 78. Mg(2+) is bound by residues aspartate 450, aspartate 452, and aspartate 454. Zn(2+)-binding residues include cysteine 818, cysteine 892, cysteine 899, and cysteine 902.

This sequence belongs to the RNA polymerase beta' chain family. As to quaternary structure, the RNAP catalytic core consists of 2 alpha, 1 beta, 1 beta' and 1 omega subunit. When a sigma factor is associated with the core the holoenzyme is formed, which can initiate transcription. Requires Mg(2+) as cofactor. Zn(2+) is required as a cofactor.

It catalyses the reaction RNA(n) + a ribonucleoside 5'-triphosphate = RNA(n+1) + diphosphate. In terms of biological role, DNA-dependent RNA polymerase catalyzes the transcription of DNA into RNA using the four ribonucleoside triphosphates as substrates. This Streptococcus suis (strain 98HAH33) protein is DNA-directed RNA polymerase subunit beta'.